A 1456-amino-acid chain; its full sequence is Alpha-2-macroglobulin-like protein 1 (1456 aa).

Residues 1–19 (MVPTILLSALLLHFTDVVA) form the signal peptide. N-linked (GlcNAc...) asparagine glycans are attached at residues Asn48, Asn172, and Asn868.

This sequence belongs to the protease inhibitor I39 (alpha-2-macroglobulin) family. Homotetramer; consists of two dimer pairs that are disulfide-linked. Part of a complex composed of complement component C3, CLCA1/CLCA3, A2ML1/OH and ALB/serum albumin.

It localises to the secreted. Functionally, inhibits protease gelatinolytic complex activity against type 1 collagen. The protein is Alpha-2-macroglobulin-like protein 1 of Mus musculus (Mouse).